The following is a 216-amino-acid chain: 3-isopropylmalate dehydratase small subunit (216 aa).

Belongs to the LeuD family. LeuD type 1 subfamily. Heterodimer of LeuC and LeuD.

The catalysed reaction is (2R,3S)-3-isopropylmalate = (2S)-2-isopropylmalate. It functions in the pathway amino-acid biosynthesis; L-leucine biosynthesis; L-leucine from 3-methyl-2-oxobutanoate: step 2/4. Catalyzes the isomerization between 2-isopropylmalate and 3-isopropylmalate, via the formation of 2-isopropylmaleate. The chain is 3-isopropylmalate dehydratase small subunit from Albidiferax ferrireducens (strain ATCC BAA-621 / DSM 15236 / T118) (Rhodoferax ferrireducens).